The primary structure comprises 1836 residues: Sodium channel protein type 4 subunit alpha (1836 aa).

Residues 1-131 lie on the Cytoplasmic side of the membrane; that stretch reads MARPSLCTLV…RGAIKVLIHA (131 aa). Residues 39–60 are compositionally biased toward basic and acidic residues; that stretch reads LQRNKQMEIEEPERKPRSDLEA. A disordered region spans residues 39–63; it reads LQRNKQMEIEEPERKPRSDLEAGKN. An I repeat occupies 113 to 454; sequence LLSPFSVVRR…VVAMAYAEQN (342 aa). Residues 132–150 form a helical membrane-spanning segment; the sequence is LFSMFIMITILTNCVFMTM. Residues 151–157 lie on the Extracellular side of the membrane; it reads SDPPPWS. A helical transmembrane segment spans residues 158 to 178; sequence KNVEYTFTGIYTFESLIKILA. The Cytoplasmic portion of the chain corresponds to 179-192; sequence RGFCVDDFTFLRDP. A helical membrane pass occupies residues 193–210; it reads WNWLDFSVIMMAYLTEFV. The Extracellular portion of the chain corresponds to 211-216; that stretch reads DLGNIS. Residue Asn-214 is glycosylated (N-linked (GlcNAc...) asparagine). The helical transmembrane segment at 217-233 threads the bilayer; that stretch reads ALRTFRVLRALKTITVI. At 234–252 the chain is on the cytoplasmic side; sequence PGLKTIVGALIQSVKKLSD. A helical membrane pass occupies residues 253–272; it reads VMILTVFCLSVFALVGLQLF. The Extracellular segment spans residues 273–391; it reads MGNLRQKCVR…PNYGYTSYDT (119 aa). Cys-280 and Cys-360 are joined by a disulfide. N-linked (GlcNAc...) asparagine glycosylation is found at Asn-288, Asn-291, Asn-297, Asn-303, Asn-315, Asn-321, Asn-333, and Asn-362. The cysteines at positions 369 and 375 are disulfide-linked. The pore-forming intramembrane region spans 392–416; it reads FSWAFLALFRLMTQDYWENLFQLTL. Residues 417-423 lie on the Extracellular side of the membrane; sequence RAAGKTY. Residues 424 to 444 form a helical membrane-spanning segment; that stretch reads MIFFVVIIFLGSFYLINLILA. Over 445–578 the chain is Cytoplasmic; the sequence is VVAMAYAEQN…NIIHLIVMDP (134 aa). A disordered region spans residues 493–530; it reads GGEADGDPAHGKDCNGSLDTSQGEKGAPRQSSSGDSGI. The segment covering 509–528 has biased composition (polar residues); sequence SLDTSQGEKGAPRQSSSGDS. An II repeat occupies 560–832; that stretch reads CCAPWLKFKN…QIAIGRIKLG (273 aa). A helical transmembrane segment spans residues 579–597; it reads FVDLGITICIVLNTLFMAM. The Extracellular portion of the chain corresponds to 598–608; it reads EHYPMTEHFDN. A helical transmembrane segment spans residues 609–628; the sequence is VLTVGNLVFTGIFTAEMVLK. Residues 629-642 are Cytoplasmic-facing; it reads LIAMDPYEYFQQGW. A helical transmembrane segment spans residues 643-662; it reads NIFDSIIVTLSLVELGLANV. The Extracellular segment spans residues 663 to 664; that stretch reads QG. A helical transmembrane segment spans residues 665-682; sequence LSVLRSFRLLRVFKLAKS. The Cytoplasmic segment spans residues 683 to 698; the sequence is WPTLNMLIKIIGNSVG. Residues 699–717 traverse the membrane as a helical segment; it reads ALGNLTLVLAIIVFIFAVV. Residues 718–746 are Extracellular-facing; it reads GMQLFGKSYKECVCKIALDCNLPRWHMHD. Cys-731 and Cys-737 are oxidised to a cystine. The pore-forming intramembrane region spans 747 to 767; that stretch reads FFHSFLIVFRILCGEWIETMW. Residues 768 to 778 are Extracellular-facing; sequence DCMEVAGQAMC. A disulfide bridge connects residues Cys-769 and Cys-778. Residues 779–797 form a helical membrane-spanning segment; sequence LTVFLMVMVIGNLVVLNLF. The Cytoplasmic segment spans residues 798–1032; the sequence is LALLLSSFSA…ACFKIVEHNW (235 aa). Disordered stretches follow at residues 863–885 and 930–992; these read GAGEAGEAGETAPEDEKKEPPEE and ESDL…QPEE. Residues 876 to 885 show a composition bias toward basic and acidic residues; the sequence is EDEKKEPPEE. 2 stretches are compositionally biased toward acidic residues: residues 930–947 and 975–992; these read ESDLEMPTEEETDTFSEP and EDPEEQAEENPEGEQPEE. An III repeat occupies 1013 to 1326; that stretch reads RGKKWWTLRR…KKYYNAMKKL (314 aa). The helical transmembrane segment at 1033 to 1050 threads the bilayer; it reads FETFIVFMILLSSGALAF. Topologically, residues 1051–1063 are extracellular; the sequence is EDIYIEQRRVIRT. Residues 1064–1082 traverse the membrane as a helical segment; the sequence is ILEYADKVFTYIFIMEMLL. The Cytoplasmic segment spans residues 1083 to 1096; it reads KWVAYGFKVYFTNA. The helical transmembrane segment at 1097-1115 threads the bilayer; sequence WCWLDFLIVDVSIISLVAN. At 1116 to 1123 the chain is on the extracellular side; sequence WLGYSELG. A helical membrane pass occupies residues 1124–1142; it reads PIKSLRTLRALRPLRALSR. Topologically, residues 1143-1159 are cytoplasmic; the sequence is FEGMRVVVNALLGAIPS. The chain crosses the membrane as a helical span at residues 1160–1179; the sequence is IMNVLLVCLIFWLIFSIMGV. Over 1180-1230 the chain is Extracellular; sequence NLFAGKFYYCINTTTSERFDISEVNNKSECESLMHTGQVRWLNVKVNYDNV. An intrachain disulfide couples Cys-1189 to Cys-1209. 2 N-linked (GlcNAc...) asparagine glycosylation sites follow: Asn-1191 and Asn-1205. Residues 1231 to 1252 constitute an intramembrane region (pore-forming); it reads GLGYLSLLQVATFKGWMDIMYA. Residues 1253–1269 lie on the Extracellular side of the membrane; the sequence is AVDSREKEEQPQYEVNL. A helical membrane pass occupies residues 1270–1291; that stretch reads YMYLYFVIFIIFGSFFTLNLFI. The Cytoplasmic segment spans residues 1292–1354; it reads GVIIDNFNQQ…MVYDLVTKQA (63 aa). An important for rapid channel inactivation region spans residues 1310-1312; the sequence is IFM. One copy of the IV repeat lies at 1335-1633; sequence IPRPQNKIQG…WEKFDPDATQ (299 aa). Residues 1355–1372 form a helical membrane-spanning segment; sequence FDITIMILICLNMVTMMV. Residues 1373-1383 lie on the Extracellular side of the membrane; that stretch reads ETDNQSQLKVD. The helical transmembrane segment at 1384–1402 threads the bilayer; that stretch reads ILYNINMIFIIIFTGECVL. The Cytoplasmic portion of the chain corresponds to 1403–1414; sequence KMLALRQYYFTV. A helical transmembrane segment spans residues 1415–1432; the sequence is GWNIFDFVVVILSIVGLA. Over 1433-1445 the chain is Extracellular; that stretch reads LSDLIQKYFVSPT. The helical transmembrane segment at 1446–1462 threads the bilayer; it reads LFRVIRLARIGRVLRLI. Residues 1463 to 1481 are Cytoplasmic-facing; that stretch reads RGAKGIRTLLFALMMSLPA. Residues 1482–1499 traverse the membrane as a helical segment; sequence LFNIGLLLFLVMFIYSIF. The Extracellular portion of the chain corresponds to 1500 to 1521; it reads GMSNFAYVKKESGIDDMFNFET. An intramembrane region (pore-forming) is located at residues 1522–1544; it reads FGNSIICLFEITTSAGWDGLLNP. At 1545-1574 the chain is on the extracellular side; it reads ILNSGPPDCDPNLENPGTSVKGDCGNPSIG. Cys-1553 and Cys-1568 are joined by a disulfide. Residues 1575–1597 traverse the membrane as a helical segment; sequence ICFFCSYIIISFLIVVNMYIAII. Residues 1598–1836 are Cytoplasmic-facing; it reads LENFNVATEE…VRPGVKESLV (239 aa). Residues 1727 to 1756 form the IQ domain; sequence EEVCAIKIQRAYRRHLLQRSMKQASYMYRH. A disordered region spans residues 1778–1836; it reads KMYGHENGNSSSPSPEEKGEAGDAGPTMGLMPISPSDTAWPPAPPPGQTVRPGVKESLV.

This sequence belongs to the sodium channel (TC 1.A.1.10) family. Nav1.4/SCN4A subfamily. As to quaternary structure, the Nav1.4 voltage-gated sodium channel consists of an ion-conducting alpha subunit SCN4A which is functional on its own and a regulatory beta subunit SCN1B. SCN1B strongly enhances the presence of SCN4A at the cell surface. SCN1B is also required for rapid channel inactivation and recovery after inactivation. It prevents the decrease of channel activity in response to repetitive, high-frequency depolarizations. Interacts with the syntrophins SNTA1, SNTB1 and SNTB2 (via PDZ domain); probably links SCN4A to the actin cytoskeleton and the extracellular matrix via the dystrophin-associated protein complex and regulates its localization in muscle cells. Interacts with TMEM233; probable regulator of the channel.

Its subcellular location is the cell membrane. It catalyses the reaction Na(+)(in) = Na(+)(out). With respect to regulation, the channel is inhibited by tetrodotoxin and saxitoxin. Inhibited by the conotoxin GVIIJ. Pore-forming subunit of Nav1.4, a voltage-gated sodium (Nav) channel that directly mediates the depolarizing phase of action potentials in excitable membranes. Navs, also called VGSCs (voltage-gated sodium channels) or VDSCs (voltage-dependent sodium channels), operate by switching between closed and open conformations depending on the voltage difference across the membrane. In the open conformation they allow Na(+) ions to selectively pass through the pore, along their electrochemical gradient. The influx of Na+ ions provokes membrane depolarization, initiating the propagation of electrical signals throughout cells and tissues. Highly expressed in skeletal muscles, Nav1.4 generates the action potential crucial for muscle contraction. The protein is Sodium channel protein type 4 subunit alpha of Homo sapiens (Human).